The chain runs to 36 residues: Photosystem II reaction center protein Psb30 (36 aa).

The chain crosses the membrane as a helical span at residues 8–28 (IIAQLTVVTLTLLAGPVIVFL).

Belongs to the Psb30/Ycf12 family. PSII is composed of 1 copy each of membrane proteins PsbA, PsbB, PsbC, PsbD, PsbE, PsbF, PsbH, PsbI, PsbJ, PsbK, PsbL, PsbM, PsbT, PsbX, PsbY, PsbZ, Psb30/Ycf12, peripheral proteins of the oxygen-evolving complex and a large number of cofactors. It forms dimeric complexes.

The protein resides in the plastid. The protein localises to the cyanelle thylakoid membrane. A core subunit of photosystem II (PSII), probably helps stabilize the reaction center. This Cyanophora paradoxa protein is Photosystem II reaction center protein Psb30.